A 233-amino-acid chain; its full sequence is Orotidine 5'-phosphate decarboxylase (233 aa).

Residues Asp-13, Lys-35, 62–71 (DLKFHDIPNT), Thr-122, Arg-182, Gln-191, Gly-211, and Arg-212 contribute to the substrate site. Catalysis depends on Lys-64, which acts as the Proton donor.

The protein belongs to the OMP decarboxylase family. Type 1 subfamily. In terms of assembly, homodimer.

It catalyses the reaction orotidine 5'-phosphate + H(+) = UMP + CO2. The protein operates within pyrimidine metabolism; UMP biosynthesis via de novo pathway; UMP from orotate: step 2/2. Catalyzes the decarboxylation of orotidine 5'-monophosphate (OMP) to uridine 5'-monophosphate (UMP). In Pseudomonas fluorescens (strain ATCC BAA-477 / NRRL B-23932 / Pf-5), this protein is Orotidine 5'-phosphate decarboxylase.